The following is a 274-amino-acid chain: Malonyl-[acyl-carrier protein] O-methyltransferase (274 aa).

It belongs to the methyltransferase superfamily.

The enzyme catalyses malonyl-[ACP] + S-adenosyl-L-methionine = malonyl-[ACP] methyl ester + S-adenosyl-L-homocysteine. It functions in the pathway cofactor biosynthesis; biotin biosynthesis. Functionally, converts the free carboxyl group of a malonyl-thioester to its methyl ester by transfer of a methyl group from S-adenosyl-L-methionine (SAM). It allows to synthesize pimeloyl-ACP via the fatty acid synthetic pathway. The protein is Malonyl-[acyl-carrier protein] O-methyltransferase of Priestia megaterium (strain DSM 319 / IMG 1521) (Bacillus megaterium).